We begin with the raw amino-acid sequence, 347 residues long: GMP reductase (347 aa).

108-131 (TDFEKTKQILIANPALNFLCIDVA) is a binding site for NADP(+). K(+)-binding residues include G181 and G183. Residue C186 is the Thioimidate intermediate of the active site. 216–239 (IISDGGCTMPGDVAKAFGGGADFV) contributes to the NADP(+) binding site.

The protein belongs to the IMPDH/GMPR family. GuaC type 1 subfamily. Homotetramer.

It catalyses the reaction IMP + NH4(+) + NADP(+) = GMP + NADPH + 2 H(+). Its function is as follows. Catalyzes the irreversible NADPH-dependent deamination of GMP to IMP. It functions in the conversion of nucleobase, nucleoside and nucleotide derivatives of G to A nucleotides, and in maintaining the intracellular balance of A and G nucleotides. This chain is GMP reductase, found in Enterobacter sp. (strain 638).